Here is a 1228-residue protein sequence, read N- to C-terminus: ABC transporter B family member 16 (1228 aa).

Helical transmembrane passes span 22–42, 69–89, 145–167, 171–193, 251–271, and 283–303; these read MGLGLIGAVGDGFITPILFFI, LAMLYVACASWVICFLEGYCW, LPNILMNASAFVGSYIVGFMLLW, IVGFPFIILLLIPGLMYGRALIG, GIAIGSNGIVYAIWGFLTWYG, and GTVSTVTVCVTFGGTALGQAL. The region spanning 22 to 311 is the ABC transmembrane type-1 1 domain; the sequence is MGLGLIGAVG…ALSNLKYFSE (290 aa). An ABC transporter 1 domain is found at 346–582; sequence VEFNNVKCKY…DGKYTSLVRL (237 aa). Position 381–388 (381–388) interacts with ATP; sequence GGSGSGKS. Asn-529, Asn-593, and Asn-628 each carry an N-linked (GlcNAc...) asparagine glycan. Residues 658–946 enclose the ABC transmembrane type-1 2 domain; it reads ALCGCLSASL…AGTMTTDLAK (289 aa). 2 helical membrane passes run 667–687 and 700–720; these read LGGAVQPIYAYSSGLMISVFF and IYVLLFFGLALFTFFTSISQQ. N-linked (GlcNAc...) asparagine glycosylation occurs at Asn-755. Transmembrane regions (helical) follow at residues 781 to 801 and 805 to 825; these read LLVQTISTVMVACTIGLVIAW and IVMISVQPVIIVCYYIQRVLL. The N-linked (GlcNAc...) asparagine glycan is linked to Asn-827. 2 consecutive transmembrane segments (helical) span residues 881-901 and 920-940; these read SWLAGIMLGTTQSLITCTSAL and FFELFLIFKTTGRAIAEAGTM. Positions 981-1219 constitute an ABC transporter 2 domain; the sequence is ITFLNVDFAY…GPTGSYFSLV (239 aa). N-linked (GlcNAc...) asparagine glycosylation is present at Asn-1001. 1016 to 1023 lines the ATP pocket; the sequence is GPSRSGKS.

It belongs to the ABC transporter superfamily. ABCB family. Multidrug resistance exporter (TC 3.A.1.201) subfamily.

It is found in the membrane. The polypeptide is ABC transporter B family member 16 (ABCB16) (Arabidopsis thaliana (Mouse-ear cress)).